Reading from the N-terminus, the 312-residue chain is Golgi to ER traffic protein 2 (312 aa).

Topologically, residues 1 to 175 (MSDSPSISAE…VQYNTYRHQV (175 aa)) are cytoplasmic. A helical membrane pass occupies residues 176 to 196 (WKFRFLAVRYFALLANFIYHF). The Lumenal segment spans residues 197–224 (YIIGDSISFASSSHQFIRELIPVEPARS). A helical transmembrane segment spans residues 225-244 (FFTLFSTIEVVIIASYYFLG). Residues 245–288 (TKEGFFSTATSNNFVVKLLDMGSMVLPQLQQFKTIAVRLLGYYE) are Cytoplasmic-facing. Residues 289-309 (LLAVLLGDLSLVVVLFGLHSV) traverse the membrane as a helical segment. The Lumenal segment spans residues 310-312 (LGN).

It belongs to the GET2 family. As to quaternary structure, component of the Golgi to ER traffic (GET) complex, which is composed of GET1, GET2 and GET3. Within the complex, GET1 and GET2 form a heterotetramer which is stabilized by phosphatidylinositol binding and which binds to the GET3 homodimer.

The protein localises to the endoplasmic reticulum membrane. It is found in the golgi apparatus membrane. Functionally, required for the post-translational delivery of tail-anchored (TA) proteins to the endoplasmic reticulum. Together with GET1, acts as a membrane receptor for soluble GET3, which recognizes and selectively binds the transmembrane domain of TA proteins in the cytosol. The GET complex cooperates with the HDEL receptor ERD2 to mediate the ATP-dependent retrieval of resident ER proteins that contain a C-terminal H-D-E-L retention signal from the Golgi to the ER. The protein is Golgi to ER traffic protein 2 of Scheffersomyces stipitis (strain ATCC 58785 / CBS 6054 / NBRC 10063 / NRRL Y-11545) (Yeast).